The primary structure comprises 418 residues: Tyrosine--tRNA ligase (418 aa).

L-tyrosine is bound at residue Tyr-38. The 'HIGH' region motif lies at 43–52 (CTAKSLHVGS). Residues Tyr-175 and Gln-179 each coordinate L-tyrosine. Positions 235-239 (KMGKT) match the 'KMSKS' region motif. Lys-238 contacts ATP. The S4 RNA-binding domain maps to 348 to 413 (LPIIKLLQMC…CGKKRHLKVM (66 aa)).

It belongs to the class-I aminoacyl-tRNA synthetase family. TyrS type 1 subfamily. In terms of assembly, homodimer.

The protein resides in the cytoplasm. It carries out the reaction tRNA(Tyr) + L-tyrosine + ATP = L-tyrosyl-tRNA(Tyr) + AMP + diphosphate + H(+). In terms of biological role, catalyzes the attachment of tyrosine to tRNA(Tyr) in a two-step reaction: tyrosine is first activated by ATP to form Tyr-AMP and then transferred to the acceptor end of tRNA(Tyr). This chain is Tyrosine--tRNA ligase, found in Ehrlichia chaffeensis (strain ATCC CRL-10679 / Arkansas).